The following is a 151-amino-acid chain: Ubiquitin-conjugating enzyme E2 W (151 aa).

One can recognise a UBC core domain in the interval 3–151 (SMQKRLQKEL…TKWWYHDDTC (149 aa)). Residue Cys-91 is the Glycyl thioester intermediate of the active site.

Belongs to the ubiquitin-conjugating enzyme family.

It localises to the nucleus. It catalyses the reaction S-ubiquitinyl-[E1 ubiquitin-activating enzyme]-L-cysteine + [E2 ubiquitin-conjugating enzyme]-L-cysteine = [E1 ubiquitin-activating enzyme]-L-cysteine + S-ubiquitinyl-[E2 ubiquitin-conjugating enzyme]-L-cysteine.. It carries out the reaction S-ubiquitinyl-[E1 ubiquitin-activating enzyme]-L-cysteine + [acceptor protein]-N-terminal-amino acid = [E1 ubiquitin-activating enzyme]-L-cysteine + N-terminal-ubiquitinyl-[acceptor protein].. It participates in protein modification; protein ubiquitination. Its function is as follows. Accepts ubiquitin from the E1 complex and catalyzes its covalent attachment to other proteins. Catalyzes monoubiquitination. Involved in degradation of misfolded chaperone substrate and DNA repair. The polypeptide is Ubiquitin-conjugating enzyme E2 W (ube2w) (Xenopus tropicalis (Western clawed frog)).